The sequence spans 467 residues: MGTTLAEKVWADHLVRKGSDGAPDLLYIDLMLMHEVTSPQAFEGLRLAGRKPRHVDQLIATEDHNTPTVDIDRPNPDETSALQLTTLEKNCKEFGVRLHPLGDADQGIVHAFAPILGLTQPGMTIVCGDSHTSTHGAFGALAFGIGTSEVEHVMATQTLSLKPFKTMAVNVNGKLPADATAKDIILAIIAKIGTGGGQGYVIEYRGEAIRNLTMDERMTVCNMSIEAGARAGMIAPDETTFEYLKGRPHAPEGELWDQAVAYWKTLKTDDDAVFDKVVDIDATKLGPYVTWGTNPGQGLPITASVPEPGKIADATKRAAAERAITYMGLKPGMPIKDIAVDTVFIGSCTNGRIDDLRQAAAIMKGHRKAENIHRVLVVPASSRVRLQAEKEGLDKVFKDFGAEWRNAGCSMCLGMNPDKLVPNERSISTSNRNFEGRQGKGSRTHLASPAVAAATAIRGTISSPADL.

[4Fe-4S] cluster contacts are provided by C348, C409, and C412. The segment at 423–448 (NERSISTSNRNFEGRQGKGSRTHLAS) is disordered.

This sequence belongs to the aconitase/IPM isomerase family. LeuC type 1 subfamily. In terms of assembly, heterodimer of LeuC and LeuD. [4Fe-4S] cluster is required as a cofactor.

The catalysed reaction is (2R,3S)-3-isopropylmalate = (2S)-2-isopropylmalate. It participates in amino-acid biosynthesis; L-leucine biosynthesis; L-leucine from 3-methyl-2-oxobutanoate: step 2/4. Functionally, catalyzes the isomerization between 2-isopropylmalate and 3-isopropylmalate, via the formation of 2-isopropylmaleate. This is 3-isopropylmalate dehydratase large subunit from Bifidobacterium longum (strain DJO10A).